The sequence spans 286 residues: ATP synthase gamma chain (286 aa).

The protein belongs to the ATPase gamma chain family. As to quaternary structure, F-type ATPases have 2 components, CF(1) - the catalytic core - and CF(0) - the membrane proton channel. CF(1) has five subunits: alpha(3), beta(3), gamma(1), delta(1), epsilon(1). CF(0) has three main subunits: a, b and c.

It is found in the cell inner membrane. Functionally, produces ATP from ADP in the presence of a proton gradient across the membrane. The gamma chain is believed to be important in regulating ATPase activity and the flow of protons through the CF(0) complex. This Shewanella frigidimarina (strain NCIMB 400) protein is ATP synthase gamma chain.